We begin with the raw amino-acid sequence, 253 residues long: uncharacterized protein (253 aa).

This is an uncharacterized protein from Acanthamoeba polyphaga mimivirus (APMV).